Here is a 70-residue protein sequence, read N- to C-terminus: Large ribosomal subunit protein bL31 (70 aa).

Zn(2+)-binding residues include C16, C18, C38, and C41.

It belongs to the bacterial ribosomal protein bL31 family. Type A subfamily. In terms of assembly, part of the 50S ribosomal subunit. Requires Zn(2+) as cofactor.

Its function is as follows. Binds the 23S rRNA. This chain is Large ribosomal subunit protein bL31, found in Mycolicibacterium gilvum (strain PYR-GCK) (Mycobacterium gilvum (strain PYR-GCK)).